The sequence spans 193 residues: dCTP deaminase (193 aa).

DCTP is bound by residues Arg110–Arg115, Asp128, Val136–Glu138, Tyr171, Lys178, and Gln182. Glu138 (proton donor/acceptor) is an active-site residue. The span at Pro170–Asp181 shows a compositional bias: basic and acidic residues. Residues Pro170 to Asp193 form a disordered region.

Belongs to the dCTP deaminase family. As to quaternary structure, homotrimer.

The catalysed reaction is dCTP + H2O + H(+) = dUTP + NH4(+). The protein operates within pyrimidine metabolism; dUMP biosynthesis; dUMP from dCTP (dUTP route): step 1/2. Its function is as follows. Catalyzes the deamination of dCTP to dUTP. In Enterobacter sp. (strain 638), this protein is dCTP deaminase.